We begin with the raw amino-acid sequence, 388 residues long: Succinate--CoA ligase [ADP-forming] subunit beta (388 aa).

Positions 9–244 (KQLFAEYGLP…PSQEDSREAE (236 aa)) constitute an ATP-grasp domain. ATP contacts are provided by residues K46, 53–55 (GRG), E99, T102, and E107. 2 residues coordinate Mg(2+): N199 and D213. Residues N264 and 321–323 (GIV) contribute to the substrate site.

The protein belongs to the succinate/malate CoA ligase beta subunit family. In terms of assembly, heterotetramer of two alpha and two beta subunits. It depends on Mg(2+) as a cofactor.

It carries out the reaction succinate + ATP + CoA = succinyl-CoA + ADP + phosphate. The enzyme catalyses GTP + succinate + CoA = succinyl-CoA + GDP + phosphate. It functions in the pathway carbohydrate metabolism; tricarboxylic acid cycle; succinate from succinyl-CoA (ligase route): step 1/1. Its function is as follows. Succinyl-CoA synthetase functions in the citric acid cycle (TCA), coupling the hydrolysis of succinyl-CoA to the synthesis of either ATP or GTP and thus represents the only step of substrate-level phosphorylation in the TCA. The beta subunit provides nucleotide specificity of the enzyme and binds the substrate succinate, while the binding sites for coenzyme A and phosphate are found in the alpha subunit. This Marinobacter nauticus (strain ATCC 700491 / DSM 11845 / VT8) (Marinobacter aquaeolei) protein is Succinate--CoA ligase [ADP-forming] subunit beta.